The following is a 326-amino-acid chain: MSQLTDGFGRSFPYLRLSLTEACNFRCSYCLPDGYQADGRPRFLQVDEIARLVRAFAALGMSKIRLTGGEPSLRKDLDEIIATVAAVPGIRKVAITTNGTLLPRRLPGWHRAGLTALNVSMDSLQRERFKTITGHDRLPEIEQGLALAQALGLPAIKLNAVLLRGLNDDELPQWMDYLRGRPFSVRFIELMRTGDNEAYFQRHHLRADVVIEQLLAAGWHERPRAADAGPAREFGHPDHRGSIGIIAPYSRDFCKGCNRLRVTAKGDLRLCLFGEFGVPLRPLLQRDEDHDALLARITTQLGLKAAGHGLHQGQTGLTPHLASIGG.

Positions 7–232 (GFGRSFPYLR…PRAADAGPAR (226 aa)) constitute a Radical SAM core domain. A GTP-binding site is contributed by Arg-16. The [4Fe-4S] cluster site is built by Cys-23 and Cys-27. S-adenosyl-L-methionine is bound at residue Tyr-29. Cys-30 provides a ligand contact to [4Fe-4S] cluster. Arg-65 is a binding site for GTP. Gly-69 provides a ligand contact to S-adenosyl-L-methionine. Thr-96 contacts GTP. Position 120 (Ser-120) interacts with S-adenosyl-L-methionine. Lys-157 contacts GTP. An S-adenosyl-L-methionine-binding site is contributed by Met-191. Cys-254 and Cys-257 together coordinate [4Fe-4S] cluster. 259 to 261 (RLR) is a binding site for GTP. Residue Cys-271 coordinates [4Fe-4S] cluster.

It belongs to the radical SAM superfamily. MoaA family. Monomer and homodimer. [4Fe-4S] cluster is required as a cofactor.

The enzyme catalyses GTP + AH2 + S-adenosyl-L-methionine = (8S)-3',8-cyclo-7,8-dihydroguanosine 5'-triphosphate + 5'-deoxyadenosine + L-methionine + A + H(+). It participates in cofactor biosynthesis; molybdopterin biosynthesis. Its function is as follows. Catalyzes the cyclization of GTP to (8S)-3',8-cyclo-7,8-dihydroguanosine 5'-triphosphate. In Stenotrophomonas maltophilia (strain K279a), this protein is GTP 3',8-cyclase.